Reading from the N-terminus, the 325-residue chain is UPF0164 protein TP_0856 (325 aa).

Residues 1-28 form the signal peptide; that stretch reads MVHYKSVFYKSAALVCGFVLAGASVAIA.

The protein belongs to the UPF0164 family.

This chain is UPF0164 protein TP_0856, found in Treponema pallidum (strain Nichols).